We begin with the raw amino-acid sequence, 156 residues long: SsrA-binding protein (156 aa).

The disordered stretch occupies residues 134–156 (RQTLREQQDKRESLRELRERNRR).

It belongs to the SmpB family.

The protein resides in the cytoplasm. Its function is as follows. Required for rescue of stalled ribosomes mediated by trans-translation. Binds to transfer-messenger RNA (tmRNA), required for stable association of tmRNA with ribosomes. tmRNA and SmpB together mimic tRNA shape, replacing the anticodon stem-loop with SmpB. tmRNA is encoded by the ssrA gene; the 2 termini fold to resemble tRNA(Ala) and it encodes a 'tag peptide', a short internal open reading frame. During trans-translation Ala-aminoacylated tmRNA acts like a tRNA, entering the A-site of stalled ribosomes, displacing the stalled mRNA. The ribosome then switches to translate the ORF on the tmRNA; the nascent peptide is terminated with the 'tag peptide' encoded by the tmRNA and targeted for degradation. The ribosome is freed to recommence translation, which seems to be the essential function of trans-translation. This Paenarthrobacter aurescens (strain TC1) protein is SsrA-binding protein.